The following is a 938-amino-acid chain: Protein O-mannosyl-transferase Tmtc2 (938 aa).

A topological domain (cytoplasmic) is located at residue Met-1. Residues 2–22 (PSLEPWLWGDSCSWLGMLAML) traverse the membrane as a helical segment. Residues 23 to 34 (RLRLHKSNMDFT) are Extracellular-facing. The chain crosses the membrane as a helical span at residues 35–55 (CLFCCSLAFVLYLNTLGAGFV). At 56–108 (YDDRRAILANADVSGGTPWQRSFSNDFWGTPLTDSGSHGSWRPLCVLSFRLNY) the chain is on the cytoplasmic side. A helical transmembrane segment spans residues 109–129 (LIGGGFAPWGFHLVNNLLHCV). The Extracellular segment spans residues 130-139 (ATALVVRVAR). Residues 140 to 160 (TLLASVWAVLAAGALFAAHPI) traverse the membrane as a helical segment. Topologically, residues 161–164 (HTEA) are cytoplasmic. Residues 165-185 (VAGVVGRADLAACVCYLLTYL) form a helical membrane-spanning segment. Residues 186–208 (SYLRHMRWRESGDPRQWLALGAT) are Extracellular-facing. Residues 209–229 (LILAAAGLLCKETAITALLVC) form a helical membrane-spanning segment. Residues 230 to 249 (ALFDVMRGLSGQVDKQRLRS) lie on the Cytoplasmic side of the membrane. The helical transmembrane segment at 250-270 (VCIVLGALFCMAYCRLVIVPG) threads the bilayer. Residues 271–291 (PQTAFSSADNPIARTPSAWTR) lie on the Extracellular side of the membrane. The helical transmembrane segment at 292–312 (LLTFLYLPVFNLRLLLQPNVL) threads the bilayer. Topologically, residues 313-510 (SFDWGMDALP…HACVLIMSLS (198 aa)) are cytoplasmic. The disordered stretch occupies residues 450 to 480 (RSSSSCSNSTNSSSSSSSSSSSSSSSSSSLS). Residues 511–531 (FLALPFLPASNLLFYVGFVVA) form a helical membrane-spanning segment. At 532-533 (ER) the chain is on the extracellular side. Residues 534–554 (LLYLPSVGFCLLVGYGVSKLM) form a helical membrane-spanning segment. Over 555-562 (SCNQRTRN) the chain is Cytoplasmic. A helical transmembrane segment spans residues 563–580 (ILLLSFSLLLAAMSLRTL). Topologically, residues 581 to 938 (RRNADWRDEE…NLAKLGVTNV (358 aa)) are extracellular. 9 TPR repeats span residues 602–635 (PKAL…RPNM), 636–669 (ADVH…RPNL), 670–703 (AVAY…DGAA), 715–748 (SSAY…LPGL), 753–786 (EILY…QPNQ), 788–821 (AAHL…APEQ), 822–855 (ASVY…APND), 856–889 (YTLV…RPGD), and 890–923 (AHAH…QPGD). Asn-800 carries N-linked (GlcNAc...) asparagine glycosylation.

Belongs to the TMTC family.

It is found in the membrane. Its subcellular location is the endoplasmic reticulum. The enzyme catalyses a di-trans,poly-cis-dolichyl beta-D-mannosyl phosphate + L-seryl-[protein] = 3-O-(alpha-D-mannosyl)-L-seryl-[protein] + a di-trans,poly-cis-dolichyl phosphate + H(+). It catalyses the reaction a di-trans,poly-cis-dolichyl beta-D-mannosyl phosphate + L-threonyl-[protein] = 3-O-(alpha-D-mannosyl)-L-threonyl-[protein] + a di-trans,poly-cis-dolichyl phosphate + H(+). The protein operates within protein modification; protein glycosylation. Functionally, transfers mannosyl residues to the hydroxyl group of serine or threonine residues. The chain is Protein O-mannosyl-transferase Tmtc2 from Drosophila melanogaster (Fruit fly).